Here is a 35-residue protein sequence, read N- to C-terminus: MSDIN-like toxin proprotein 6 (35 aa).

Residues 1-10 constitute a propeptide that is removed on maturation; the sequence is MSDINTTRLP. The segment at residues 11–18 is a cross-link (cyclopeptide (Phe-Pro)); it reads FVFVASPP. A propeptide spanning residues 19–35 is cleaved from the precursor; the sequence is CVGDDIAMVLTRGENLC.

Belongs to the MSDIN fungal toxin family. Processed by the macrocyclase-peptidase enzyme POPB to yield a toxic cyclic octapeptide. POPB first removes 10 residues from the N-terminus. Conformational trapping of the remaining peptide forces the enzyme to release this intermediate rather than proceed to macrocyclization. The enzyme rebinds the remaining peptide in a different conformation and catalyzes macrocyclization of the N-terminal 8 residues. In terms of tissue distribution, expressed in basidiocarps.

Probable toxin that belongs to the MSDIN-like toxin family responsible for a large number of food poisoning cases and deaths. This is MSDIN-like toxin proprotein 6 from Amanita exitialis (Guangzhou destroying angel).